Here is a 390-residue protein sequence, read N- to C-terminus: MSANAETQTPQQPVKKSGKRKRLLLLLTLLFIIIAVAIGIYWFLVLRHFEETDDAYVAGNQIQIMSQVSGSVTKVWADNTDFVKEGDVLVTLDPTDARQAFEKAKTALASSVRQTHQLMINSKQLQANIEVQKIALAKAQSDYNRRVPLGNANLIGREELQHARDAVTSAQAQLDVAIQQYNANQAMILGTKLEDQPAVQQAATEVRNAWLALERTRIISPMTGYVSRRAVQPGAQISPTTPLMAVVPATNMWVDANFKETQIANMRIGQPVTITTDIYGDDVKYTGKVVGLDMGTGSAFSLLPAQNATGNWIKVVQRLPVRIELDQKQLEQYPLRIGLSTLVSVNTTNRDGQVLANKVRSTPVAVSTAREISLAPVNKLIDDIVKANAG.

Topologically, residues 1-24 (MSANAETQTPQQPVKKSGKRKRLL) are cytoplasmic. A helical transmembrane segment spans residues 25–45 (LLLTLLFIIIAVAIGIYWFLV). The Periplasmic portion of the chain corresponds to 46 to 390 (LRHFEETDDA…IDDIVKANAG (345 aa)). Residues 120-180 (INSKQLQANI…QAQLDVAIQQ (61 aa)) are a coiled coil.

Belongs to the membrane fusion protein (MFP) (TC 8.A.1) family. As to quaternary structure, homodimer and homotrimer. Part of the tripartite efflux system EmrAB-TolC, which is composed of an inner membrane transporter, EmrB, a periplasmic membrane fusion protein, EmrA, and an outer membrane component, TolC. The complex forms a large protein conduit and can translocate molecules across both the inner and outer membranes. Interacts with EmrB. EmrAB complex forms a dimer in vitro.

It localises to the cell inner membrane. Its function is as follows. Part of the tripartite efflux system EmrAB-TolC, which confers resistance to antibiotics such as CCCP, FCCP, 2,4-dinitrophenol and nalidixic acid. EmrA is a drug-binding protein that provides a physical link between EmrB and TolC. The protein is Multidrug export protein EmrA (emrA) of Escherichia coli (strain K12).